Here is a 152-residue protein sequence, read N- to C-terminus: Small ribosomal subunit protein uS8m (152 aa).

It belongs to the universal ribosomal protein uS8 family. In terms of assembly, component of the mitochondrial small ribosomal subunit (mt-SSU). Mature yeast 74S mitochondrial ribosomes consist of a small (37S) and a large (54S) subunit. The 37S small subunit contains a 15S ribosomal RNA (15S mt-rRNA) and at least 32 different proteins. The 54S large subunit contains a 21S rRNA (21S mt-rRNA) and at least 45 different proteins.

Its subcellular location is the mitochondrion. Its function is as follows. Component of the mitochondrial ribosome (mitoribosome), a dedicated translation machinery responsible for the synthesis of mitochondrial genome-encoded proteins, including at least some of the essential transmembrane subunits of the mitochondrial respiratory chain. The mitoribosomes are attached to the mitochondrial inner membrane and translation products are cotranslationally integrated into the membrane. The polypeptide is Small ribosomal subunit protein uS8m (mrps8) (Schizosaccharomyces pombe (strain 972 / ATCC 24843) (Fission yeast)).